Reading from the N-terminus, the 381-residue chain is Subtilisin J (381 aa).

Residues 1 to 29 (MRSKKLWISLLFALTLIFTMAFSNMSVQA) form the signal peptide. A propeptide spanning residues 30-106 (AGKSSTEKKY…VEEDHIAHEY (77 aa)) is cleaved from the precursor. The Inhibitor I9 domain occupies 38 to 103 (KYIVGFKQTM…VAYVEEDHIA (66 aa)). Gln108 lines the Ca(2+) pocket. The region spanning 111-380 (PYGISQIKAP…KGLINVQAAA (270 aa)) is the Peptidase S8 domain. The active-site Charge relay system is the Asp138. Residue Asp147 participates in Ca(2+) binding. His170 functions as the Charge relay system in the catalytic mechanism. Ca(2+) contacts are provided by Leu181, Asn183, Ile185, Val187, Ala275, Tyr277, and Thr280. Ser327 functions as the Charge relay system in the catalytic mechanism.

It belongs to the peptidase S8 family. Ca(2+) serves as cofactor.

The protein resides in the secreted. The enzyme catalyses Hydrolysis of proteins with broad specificity for peptide bonds, and a preference for a large uncharged residue in P1. Hydrolyzes peptide amides.. In terms of biological role, subtilisin is an extracellular alkaline serine protease, it catalyzes the hydrolysis of proteins and peptide amides. The sequence is that of Subtilisin J (aprJ) from Geobacillus stearothermophilus (Bacillus stearothermophilus).